A 91-amino-acid chain; its full sequence is Large ribosomal subunit protein uL23c (91 aa).

This sequence belongs to the universal ribosomal protein uL23 family. As to quaternary structure, part of the 50S ribosomal subunit.

The protein localises to the plastid. Its subcellular location is the chloroplast. Functionally, binds to 23S rRNA. This chain is Large ribosomal subunit protein uL23c (rpl23), found in Anthoceros angustus (Hornwort).